The primary structure comprises 462 residues: Argininosuccinate lyase (462 aa).

This sequence belongs to the lyase 1 family. Argininosuccinate lyase subfamily.

It is found in the cytoplasm. It carries out the reaction 2-(N(omega)-L-arginino)succinate = fumarate + L-arginine. It functions in the pathway amino-acid biosynthesis; L-arginine biosynthesis; L-arginine from L-ornithine and carbamoyl phosphate: step 3/3. This chain is Argininosuccinate lyase, found in Bacillus cereus (strain AH820).